Here is a 742-residue protein sequence, read N- to C-terminus: Photosystem I P700 chlorophyll a apoprotein A2 (742 aa).

Transmembrane regions (helical) follow at residues 46-69, 135-158, 175-199, 273-291, 336-359, 375-401, 423-445, and 525-543; these read LFST…FHVA, LFQA…LHLQ, LNHH…HVAI, IAHH…GHMY, LHFQ…QHMG, SALY…IFFV, ALIS…IYVH, and FLVH…LILI. Positions 567 and 576 each coordinate [4Fe-4S] cluster. A run of 2 helical transmembrane segments spans residues 583–604 and 651–673; these read AMYL…YWHW and LSPW…MFLI. Divinyl chlorophyll a-binding residues include histidine 662, methionine 670, and tyrosine 678. Tryptophan 679 serves as a coordination point for phylloquinone. Residues 715-735 form a helical membrane-spanning segment; it reads LVGLAHFTIGNILTFGAFVIA.

This sequence belongs to the PsaA/PsaB family. In terms of assembly, the PsaA/B heterodimer binds the P700 divinyl chlorophyll special pair and subsequent electron acceptors. PSI consists of a core antenna complex that captures photons, and an electron transfer chain that converts photonic excitation into a charge separation. The cyanobacterial PSI reaction center is composed of one copy each of PsaA,B,C,D,E,F,I,J,K,L,M and X, and forms trimeric complexes. Requires PSI electron transfer chain: 5 divinyl chlorophyll a, 1 divinyl chlorophyll a', 2 phylloquinones and 3 4Fe-4S clusters. PSI core antenna: 90 divinyl chlorophyll a, 22 carotenoids, 3 phospholipids and 1 galactolipid. P700 is a divinyl chlorophyll a/divinyl chlorophyll a' dimer, A0 is one or more divinyl chlorophyll a, A1 is one or both phylloquinones and FX is a shared 4Fe-4S iron-sulfur center. as cofactor.

The protein resides in the cellular thylakoid membrane. The enzyme catalyses reduced [plastocyanin] + hnu + oxidized [2Fe-2S]-[ferredoxin] = oxidized [plastocyanin] + reduced [2Fe-2S]-[ferredoxin]. Functionally, psaA and PsaB bind P700, the primary electron donor of photosystem I (PSI), as well as the electron acceptors A0, A1 and FX. PSI is a plastocyanin/cytochrome c6-ferredoxin oxidoreductase, converting photonic excitation into a charge separation, which transfers an electron from the donor P700 chlorophyll pair to the spectroscopically characterized acceptors A0, A1, FX, FA and FB in turn. Oxidized P700 is reduced on the lumenal side of the thylakoid membrane by plastocyanin or cytochrome c6. The chain is Photosystem I P700 chlorophyll a apoprotein A2 from Prochlorococcus marinus (strain MIT 9312).